The primary structure comprises 1388 residues: Rho-associated protein kinase 2 (1388 aa).

A disordered region spans residues 1 to 24 (MSRPPPTGKMPGAPEAAAGDGAGA). A Protein kinase domain is found at 92–354 (YDVVKVIGRG…VEEIKSASFF (263 aa)). Residues 98–106 (IGRGAFGEV) and Lys121 each bind ATP. Asp214 serves as the catalytic Proton acceptor. An AGC-kinase C-terminal domain is found at 357-425 (DQWNWDNIRE…FRENLLLSDS (69 aa)). The segment at 363–784 (NIRETAAPVV…LNELLKQKDV (422 aa)) is interaction with PPP1R12A. The segment at 373-420 (PELSSDIDSSNFDDIEDDKGDVETFPIPKAFVGNQLPFIGFTYFRENL) is interaction with NPM1. Phosphothreonine; by ROCK2 is present on Thr414. 2 coiled-coil regions span residues 439–1024 (SEES…EKQL) and 1052–1131 (SDTD…IGMD). Positions 497–573 (TLRQLEREKA…LDEANALLRT (77 aa)) constitute an REM-1 domain. The span at 513 to 530 (AEYQRKADHEADKKRNLE) shows a compositional bias: basic and acidic residues. A disordered region spans residues 513–532 (AEYQRKADHEADKKRNLEND). A Phosphotyrosine; by SRC modification is found at Tyr722. Positions 979–1047 (TSDVANLANE…LAEIMNRKEP (69 aa)) constitute a RhoBD domain. The RHOA binding stretch occupies residues 979–1047 (TSDVANLANE…LAEIMNRKEP (69 aa)). Residue Ser1137 is modified to Phosphoserine. Residues 1150 to 1349 (ESRLEGWLSL…WVSRLVKKIP (200 aa)) form the PH domain. Thr1212 bears the Phosphothreonine mark. The segment at 1260-1315 (GHEFIPTLYHFPTNCEACMKPLWHMFKPPPALECSRCHIKCHKDHMDKKEEIIAPC) adopts a Phorbol-ester/DAG-type zinc-finger fold. Positions 1345–1388 (VKKIPKKPPAPDPFARSSPRTSMKIQQNQSIRRPSRQLAPNKPS) are disordered. Ser1362 and Ser1374 each carry phosphoserine. A compositionally biased stretch (polar residues) spans 1362 to 1376 (SPRTSMKIQQNQSIR).

This sequence belongs to the protein kinase superfamily. AGC Ser/Thr protein kinase family. Homodimer. Interacts with IRS1. Interacts with RAF1. Interacts with RHOA (activated by GTP), RHOB, RHOC. Interacts with PPP1R12A. Interacts with EP300. Interacts with CHORDC1. Interacts with BRCA2. Interacts with NPM1; this interaction enhances its activity. Interacts with SORL1. Interacts with PJVK. Mg(2+) serves as cofactor. In terms of processing, autophosphorylated. Phosphorylation at Tyr-722 reduces its binding to RHOA and is crucial for focal adhesion dynamics. Dephosphorylation by PTPN11 stimulates its RHOA binding activity. Cleaved by granzyme B during apoptosis. This leads to constitutive activation of the kinase and membrane blebbing. As to expression, highly expressed in brain, lung, liver, skeletal muscle, kidney and testis.

Its subcellular location is the cytoplasm. It is found in the cell membrane. It localises to the nucleus. The protein resides in the cytoskeleton. The protein localises to the microtubule organizing center. Its subcellular location is the centrosome. The catalysed reaction is L-seryl-[protein] + ATP = O-phospho-L-seryl-[protein] + ADP + H(+). It carries out the reaction L-threonyl-[protein] + ATP = O-phospho-L-threonyl-[protein] + ADP + H(+). With respect to regulation, activated by RHOA binding. Inhibited by Y-27632. Functionally, protein kinase which is a key regulator of actin cytoskeleton and cell polarity. Involved in regulation of smooth muscle contraction, actin cytoskeleton organization, stress fiber and focal adhesion formation, neurite retraction, cell adhesion and motility via phosphorylation of ADD1, BRCA2, CNN1, EZR, DPYSL2, EP300, MSN, MYL9/MLC2, NPM1, RDX, PPP1R12A and VIM. Phosphorylates SORL1 and IRF4. Acts as a negative regulator of VEGF-induced angiogenic endothelial cell activation. Positively regulates the activation of p42/MAPK1-p44/MAPK3 and of p90RSK/RPS6KA1 during myogenic differentiation. Plays an important role in the timely initiation of centrosome duplication. Inhibits keratinocyte terminal differentiation. May regulate closure of the eyelids and ventral body wall through organization of actomyosin bundles. Plays a critical role in the regulation of spine and synaptic properties in the hippocampus. Plays a role in placental homeostasis during the perinatal period. Plays an important role in generating the circadian rhythm of the aortic myofilament Ca(2+) sensitivity and vascular contractility by modulating the myosin light chain phosphorylation. This chain is Rho-associated protein kinase 2 (Rock2), found in Rattus norvegicus (Rat).